Consider the following 107-residue polypeptide: Translation initiation factor IF-1, chloroplastic (107 aa).

The 76-residue stretch at 8-83 folds into the S1-like domain; the sequence is REKKNPREAK…SKGRIIYRLP (76 aa).

This sequence belongs to the IF-1 family. As to quaternary structure, component of the 30S ribosomal translation pre-initiation complex which assembles on the 30S ribosome in the order IF-2 and IF-3, IF-1 and N-formylmethionyl-tRNA(fMet); mRNA recruitment can occur at any time during PIC assembly.

The protein resides in the plastid. The protein localises to the chloroplast. In terms of biological role, one of the essential components for the initiation of protein synthesis. Stabilizes the binding of IF-2 and IF-3 on the 30S subunit to which N-formylmethionyl-tRNA(fMet) subsequently binds. Helps modulate mRNA selection, yielding the 30S pre-initiation complex (PIC). Upon addition of the 50S ribosomal subunit IF-1, IF-2 and IF-3 are released leaving the mature 70S translation initiation complex. This chain is Translation initiation factor IF-1, chloroplastic, found in Lolium perenne (Perennial ryegrass).